A 78-amino-acid chain; its full sequence is NAD(P)H-quinone oxidoreductase subunit O (78 aa).

This sequence belongs to the complex I NdhO subunit family. NDH-1 can be composed of about 15 different subunits; different subcomplexes with different compositions have been identified which probably have different functions.

Its subcellular location is the cellular thylakoid membrane. It carries out the reaction a plastoquinone + NADH + (n+1) H(+)(in) = a plastoquinol + NAD(+) + n H(+)(out). It catalyses the reaction a plastoquinone + NADPH + (n+1) H(+)(in) = a plastoquinol + NADP(+) + n H(+)(out). Functionally, NDH-1 shuttles electrons from an unknown electron donor, via FMN and iron-sulfur (Fe-S) centers, to quinones in the respiratory and/or the photosynthetic chain. The immediate electron acceptor for the enzyme in this species is believed to be plastoquinone. Couples the redox reaction to proton translocation, and thus conserves the redox energy in a proton gradient. Cyanobacterial NDH-1 also plays a role in inorganic carbon-concentration. The protein is NAD(P)H-quinone oxidoreductase subunit O of Prochlorococcus marinus (strain MIT 9215).